A 105-amino-acid chain; its full sequence is Prokineticin-1 (105 aa).

The signal sequence occupies residues 1-19 (MRGAVHIFIMLLLATASDC). Disulfide bonds link Cys-26-Cys-38, Cys-32-Cys-50, Cys-37-Cys-78, Cys-60-Cys-86, and Cys-80-Cys-96.

Belongs to the AVIT (prokineticin) family. In terms of tissue distribution, highly expressed in liver and ovary and weakly expressed in testis and placenta. Expressed in mucosa and mesenchyme of embryonic gut during enteric nervous system development (at protein level). Predominantly expressed in kidney and liver. Also expressed in lung, ovary, placenta and testis. In fetal liver, is restricted to and highly expressed in hepatocytes. In adult kidney, expression is restricted to the endothelial tubule cells. In placenta, expressed throughout gestation.

The protein localises to the secreted. In terms of biological role, potently contracts gastrointestinal (GI) smooth muscle. Induces proliferation, migration and fenestration (the formation of membrane discontinuities) in capillary endothelial cells. Induces proliferation and differentiation, but not migration, of enteric neural crest cells. Directly influences neuroblastoma progression by promoting the proliferation and migration of neuroblastoma cells. Positively regulates PTGS2 expression and prostaglandin synthesis. May play a role in placentation. May play a role in normal and pathological testis angiogenesis. In Mus musculus (Mouse), this protein is Prokineticin-1.